A 436-amino-acid polypeptide reads, in one-letter code: 3-ketoacyl-CoA thiolase (436 aa).

Catalysis depends on C99, which acts as the Acyl-thioester intermediate. Active-site proton acceptor residues include H392 and C422.

This sequence belongs to the thiolase-like superfamily. Thiolase family. In terms of assembly, heterotetramer of two alpha chains (FadJ) and two beta chains (FadI).

It is found in the cytoplasm. The enzyme catalyses an acyl-CoA + acetyl-CoA = a 3-oxoacyl-CoA + CoA. It participates in lipid metabolism; fatty acid beta-oxidation. Its function is as follows. Catalyzes the final step of fatty acid oxidation in which acetyl-CoA is released and the CoA ester of a fatty acid two carbons shorter is formed. This chain is 3-ketoacyl-CoA thiolase, found in Shigella flexneri.